Consider the following 364-residue polypeptide: UDP-N-acetylglucosamine--N-acetylmuramyl-(pentapeptide) pyrophosphoryl-undecaprenol N-acetylglucosamine transferase (364 aa).

Residues 10 to 12 (TGG), asparagine 128, arginine 170, serine 199, isoleucine 250, and glutamine 295 each bind UDP-N-acetyl-alpha-D-glucosamine.

The protein belongs to the glycosyltransferase 28 family. MurG subfamily.

It localises to the cell inner membrane. It catalyses the reaction di-trans,octa-cis-undecaprenyl diphospho-N-acetyl-alpha-D-muramoyl-L-alanyl-D-glutamyl-meso-2,6-diaminopimeloyl-D-alanyl-D-alanine + UDP-N-acetyl-alpha-D-glucosamine = di-trans,octa-cis-undecaprenyl diphospho-[N-acetyl-alpha-D-glucosaminyl-(1-&gt;4)]-N-acetyl-alpha-D-muramoyl-L-alanyl-D-glutamyl-meso-2,6-diaminopimeloyl-D-alanyl-D-alanine + UDP + H(+). Its pathway is cell wall biogenesis; peptidoglycan biosynthesis. In terms of biological role, cell wall formation. Catalyzes the transfer of a GlcNAc subunit on undecaprenyl-pyrophosphoryl-MurNAc-pentapeptide (lipid intermediate I) to form undecaprenyl-pyrophosphoryl-MurNAc-(pentapeptide)GlcNAc (lipid intermediate II). In Chlorobium phaeobacteroides (strain DSM 266 / SMG 266 / 2430), this protein is UDP-N-acetylglucosamine--N-acetylmuramyl-(pentapeptide) pyrophosphoryl-undecaprenol N-acetylglucosamine transferase.